The chain runs to 841 residues: MAAAATAAASPVEGLTGGGGGGGGGVDGLFVELWRACAGPLVTVPAVGERVFYLPQGHIEQVEASTNQVAEQQGAPLYNLPWKIPCKVMNVELKAEPDTDEVYAQLTLLPEKQQDGNGSGNGNVSKDKVEEEEVVPPAATERPRVHSFCKTLTASDTSTHGGFSVLRRHADECLPPLDMSQHPPTQELVAKDLHGVEWRFRHIFRGQPRRHLLQSGWSVFVSAKRLVAGDAFIFLRGENGELRVGVRRAMRQQANIPSSVISSHSMHLGVLATAWHAVNTGTMFTVYYKPRTSPSEFVVPRDLYKESLKRNHSIGMRFKMTFEGEEAAEQRFTGTIVGVGDSDPSGWADSKWRSLKVRWDEAASVPRPDRVSPWQIEPANSPSPVNPLPAPRTKRARPNVLASSPDLSAVNKEVASKVMANSQQNGLPRAFHSQENMNLRSRFGDSNELNTSQKLTMWSSGSNQEKNNVSVQRELGSQSWMQMRRPDGSSEILSGFQPLKDTRNPLSSFPSQISGNRSNTWNTINVHYPDQNANHNMYPGTWSLMPPNTGFGVNQQNYLMTPDITLPQRSLNAKFGGNGAFTSLRAHGIDQRSSGWLGHIEPSSHIDDASSSLIKPQPLVIDHNVQKAKGSSCMLFGISLDSPAKPELLISPPSVAFDGKLQQDALEEDECSDPSKTVKPLDGAQHDSAREKHQSCPDGTKNIQSKQQNGSSRSCKKVHKQGIALGRSIDLTKFTCYDELIAELDQMFDFNGELNSSSKNWMVVYTDNEGDMMLVGDDPWNEFCNMVHKIFIYTREEVQKMNPGALNSRSEDSRSTSVERGLVGEGLQGGLSTPSLNSENC.

The disordered stretch occupies residues 109-140; the sequence is LPEKQQDGNGSGNGNVSKDKVEEEEVVPPAAT. A DNA-binding region (TF-B3) is located at residues 148–250; sequence FCKTLTASDT…ELRVGVRRAM (103 aa). Disordered regions lie at residues 366–397, 663–715, and 804–841; these read PRPD…KRAR, QDAL…SRSC, and GALN…SENC. Basic and acidic residues predominate over residues 684-695; that stretch reads AQHDSAREKHQS. Polar residues-rich tracts occupy residues 701-713 and 830-841; these read KNIQ…GSSR and GLSTPSLNSENC. The 85-residue stretch at 713–797 folds into the PB1 domain; it reads RSCKKVHKQG…HKIFIYTREE (85 aa).

Belongs to the ARF family. As to quaternary structure, homodimers and heterodimers. In terms of tissue distribution, expressed in roots, culms, leaves and young panicles.

The protein resides in the nucleus. In terms of biological role, auxin response factors (ARFs) are transcriptional factors that bind specifically to the DNA sequence 5'-TGTCTC-3' found in the auxin-responsive promoter elements (AuxREs). This Oryza sativa subsp. japonica (Rice) protein is Auxin response factor 24 (ARF24).